The following is a 707-amino-acid chain: Anaerobic ribonucleoside-triphosphate reductase (707 aa).

The ATP-cone domain occupies 4–95 (FGVIKRDGSR…EYRHDRDLAR (92 aa)). The 124-residue stretch at 584-707 (KKVNPYDKLD…EEVKRRVKHL (124 aa)) folds into the Glycine radical domain. Zn(2+)-binding residues include cysteine 645, cysteine 648, cysteine 663, and cysteine 666. Position 682 is a glycine radical (glycine 682).

It belongs to the anaerobic ribonucleoside-triphosphate reductase family. In terms of assembly, forms a tetramer composed of two NrdD and two NrdG subunits.

The catalysed reaction is a ribonucleoside 5'-triphosphate + formate + H(+) = a 2'-deoxyribonucleoside 5'-triphosphate + CO2 + H2O. With respect to regulation, activated under anaerobic conditions by NrdG, a tightly associated activase. Activation involves the formation of a glycyl radical at Gly-682. Its function is as follows. Catalyzes the conversion of ribonucleotides into deoxyribonucleotides, which are required for DNA synthesis and repair. This is Anaerobic ribonucleoside-triphosphate reductase (nrdD) from Haemophilus influenzae (strain ATCC 51907 / DSM 11121 / KW20 / Rd).